Consider the following 317-residue polypeptide: Adenine deaminase (317 aa).

His14, His16, and His194 together coordinate Zn(2+). Glu197 (proton donor) is an active-site residue. Asp275 provides a ligand contact to Zn(2+). Asp276 contacts substrate.

The protein belongs to the metallo-dependent hydrolases superfamily. Adenosine and AMP deaminases family. Adenine deaminase type 2 subfamily. The cofactor is Zn(2+).

The enzyme catalyses adenine + H2O + H(+) = hypoxanthine + NH4(+). In terms of biological role, catalyzes the hydrolytic deamination of adenine to hypoxanthine. Plays an important role in the purine salvage pathway and in nitrogen catabolism. This chain is Adenine deaminase, found in Bordetella bronchiseptica (strain ATCC BAA-588 / NCTC 13252 / RB50) (Alcaligenes bronchisepticus).